The sequence spans 464 residues: Maturase K (464 aa).

It belongs to the intron maturase 2 family. MatK subfamily.

It localises to the plastid. The protein localises to the chloroplast. Its function is as follows. Usually encoded in the trnK tRNA gene intron. Probably assists in splicing its own and other chloroplast group II introns. This is Maturase K from Castanea crenata (Japanese chestnut).